An 82-amino-acid chain; its full sequence is Protein Vpu (82 aa).

Over 1-7 (MQPIPIV) the chain is Extracellular. Residues 8–28 (AIVALVVAIIIAIVVWSIVII) traverse the membrane as a helical segment. Over 29 to 82 (EYRKILRQRKIDRLIDRLIERAEDSGNESEGEISALVEMGVEMGHHAPWDVDDL) the chain is Cytoplasmic. A phosphoserine; by host CK2 mark is found at serine 53 and serine 57.

It belongs to the HIV-1 VPU protein family. As to quaternary structure, homopentamer. Interacts with host CD4 and BRTC; these interactions induce proteasomal degradation of CD4. Interacts (via transmembrane region) with host BST2 (via transmembrane region); this interaction leads to the degradation of host BST2. Interacts with host FBXW11. Interacts with host AP1M1; this interaction plays a role in the mistrafficking and subsequent degradation of host BST2. Interacts with host RANBP2; this interaction allows Vpu to down-regulate host BLM sumoylation. In terms of processing, phosphorylated by host CK2. This phosphorylation is necessary for interaction with human BTRC and degradation of CD4.

Its subcellular location is the host membrane. With respect to regulation, ion channel activity is inhibited by hexamethylene amiloride in vitro. Enhances virion budding by targeting host CD4 and Tetherin/BST2 to proteasome degradation. Degradation of CD4 prevents any unwanted premature interactions between viral Env and its host receptor CD4 in the endoplasmic reticulum. Degradation of antiretroviral protein Tetherin/BST2 is important for virion budding, as BST2 tethers new viral particles to the host cell membrane. Mechanistically, Vpu bridges either CD4 or BST2 to BTRC, a substrate recognition subunit of the Skp1/Cullin/F-box protein E3 ubiquitin ligase, induces their ubiquitination and subsequent proteasomal degradation. The alteration of the E3 ligase specificity by Vpu seems to promote the degradation of host IKBKB, leading to NF-kappa-B down-regulation and subsequent apoptosis. Acts as a viroporin that forms an oligomeric ion channel in membranes. Modulates the host DNA repair mechanisms to promote degradation of nuclear viral cDNA in cells that are already productively infected in order to suppress immune sensing and proviral hyper-integration (superinfection). Manipulates PML-NBs and modulates SUMOylation of host BLM protein thereby enhancing its DNA-end processing activity toward viral unintegrated linear DNA. Also inhibits RAD52-mediated homologous repair of viral cDNA, preventing the generation of dead-end circular forms of single copies of the long terminal repeat and permitting sustained nucleolytic attack. The chain is Protein Vpu from Human immunodeficiency virus type 1 group M subtype B (isolate HXB2) (HIV-1).